The primary structure comprises 67 residues: Surface composition regulator (67 aa).

Belongs to the GlgS family.

In terms of biological role, major determinant of cell surface composition. Negatively regulates motility, adhesion and synthesis of biofilm exopolysaccharides. In Salmonella enteritidis PT4 (strain P125109), this protein is Surface composition regulator.